The sequence spans 332 residues: Cell growth regulator with RING finger domain protein 1 (332 aa).

Residues 274–309 form an RING-type zinc finger; that stretch reads CVVCQNGGVNWVLLPCRHACLCDSCVRYFKQCPMCR.

The protein resides in the nucleus. It is found in the endoplasmic reticulum. In terms of biological role, able to inhibit growth in several cell lines. This is Cell growth regulator with RING finger domain protein 1 (Cgrrf1) from Mus musculus (Mouse).